Consider the following 342-residue polypeptide: ATP synthase subunit a (342 aa).

Transmembrane regions (helical) follow at residues 11-31 (GLIK…AFAS), 109-129 (HVVT…IIGS), 170-190 (YLPY…LGLV), 199-219 (NINV…IAAL), 238-258 (ALWI…PVAL), 262-282 (LFAN…ISFI), 287-307 (IVAV…EIFV), and 308-328 (AFLQ…LASA).

The protein belongs to the ATPase A chain family. As to quaternary structure, F-type ATPases have 2 components, CF(1) - the catalytic core - and CF(0) - the membrane proton channel. CF(1) has five subunits: alpha(3), beta(3), gamma(1), delta(1), epsilon(1). CF(0) has four main subunits: a, b, b' and c.

The protein resides in the cell inner membrane. Key component of the proton channel; it plays a direct role in the translocation of protons across the membrane. The protein is ATP synthase subunit a of Chlorobium phaeobacteroides (strain DSM 266 / SMG 266 / 2430).